The primary structure comprises 56 residues: Lantibiotic subtilin (56 aa).

Residues 1-24 (MSKFDDFDLDVVKVSKQDSKITPQ) constitute a propeptide that is removed on maturation. Position 25 is an N2-succinyltryptophan; partial (Trp25). The lanthionine (Ser-Cys) cross-link spans 27–31 (SESLC). At Ser29 the chain carries 2,3-didehydroalanine (Ser). 4 cross-links (beta-methyllanthionine (Thr-Cys)) span residues 32-35 (TPGC), 37-43 (TGALQTC), 47-50 (TLTC), and 49-52 (TCNC). (Z)-2,3-didehydrobutyrine is present on Thr42. Ser55 bears the 2,3-didehydroalanine (Ser) mark.

This sequence belongs to the type A lantibiotic family. Maturation of lantibiotics involves the enzymatic conversion of Thr, and Ser into dehydrated AA and the formation of thioether bonds with cysteine. This is followed by membrane translocation and cleavage of the modified precursor. In terms of processing, succinylated subtilin is 10-20 times less active than subtilin. The ratio subtilin/succinylated subtilin is about 1:2 after 24 hours growth. Post-translationally, the 2,3-didehydrobutyrine is determined to be the Z-isomer.

In terms of biological role, lanthionine-containing peptide antibiotic (lantibiotic) active on Gram-positive bacteria. The bactericidal activity of lantibiotics is based on depolarization of energized bacterial cytoplasmic membranes, initiated by the formation of aqueous transmembrane pores. The chain is Lantibiotic subtilin (spaS) from Bacillus subtilis.